Consider the following 231-residue polypeptide: Protein INCA1 (231 aa).

Residues 75–99 (SLHPLEGLPPPEKLWRRKRKKLHLE) form an interaction with CCNA1 and CCNA1/CDK2 complex; essential for CDK2 inhibitory activity region. Residues 90-95 (RRKRKK) carry the Nuclear localization signal motif. Threonine 180 is subject to Phosphothreonine.

This sequence belongs to the INCA family. In terms of assembly, interacts with CCNA1. Identified in a complex with CCNA1 and CDK2. Interacts with ZNF16; the interaction inhibits INCA1 activity and induces the cell cycle process. Interacts with SPACA9. Interacts with CCNA2, CCNB1 and CCNE1. Interacts with the CCNA1/CDK2 complex. Interacts with ING5, DAZAP2, RNF26, USP15, SPOUT1, DPH7, TRIM26 and RAB5C. Post-translationally, phosphorylated when part of a complex with CCNA1 and CDK2.

It is found in the nucleus. It localises to the cytoplasm. Binds to CDK2-bound cyclins and inhibits the kinase activity of CDK2; binding to cyclins is critical for its function as CDK inhibitor. Inhibits cell growth and proliferation and may play a role in cell cycle control. Required for ING5-mediated regulation of S-phase progression, enhancement of Fas-induced apoptosis and inhibition of cell growth. The sequence is that of Protein INCA1 (Inca1) from Mus musculus (Mouse).